The following is a 151-amino-acid chain: UPF0178 protein CJA_1978 (151 aa).

It belongs to the UPF0178 family.

The chain is UPF0178 protein CJA_1978 from Cellvibrio japonicus (strain Ueda107) (Pseudomonas fluorescens subsp. cellulosa).